Reading from the N-terminus, the 423-residue chain is Serine hydroxymethyltransferase (423 aa).

Residues leucine 120 and 124 to 126 (GHL) each bind (6S)-5,6,7,8-tetrahydrofolate. Lysine 229 is modified (N6-(pyridoxal phosphate)lysine). (6S)-5,6,7,8-tetrahydrofolate is bound at residue 353-355 (SPF).

Belongs to the SHMT family. In terms of assembly, homodimer. The cofactor is pyridoxal 5'-phosphate.

Its subcellular location is the cytoplasm. The catalysed reaction is (6R)-5,10-methylene-5,6,7,8-tetrahydrofolate + glycine + H2O = (6S)-5,6,7,8-tetrahydrofolate + L-serine. The protein operates within one-carbon metabolism; tetrahydrofolate interconversion. It functions in the pathway amino-acid biosynthesis; glycine biosynthesis; glycine from L-serine: step 1/1. Its function is as follows. Catalyzes the reversible interconversion of serine and glycine with tetrahydrofolate (THF) serving as the one-carbon carrier. This reaction serves as the major source of one-carbon groups required for the biosynthesis of purines, thymidylate, methionine, and other important biomolecules. Also exhibits THF-independent aldolase activity toward beta-hydroxyamino acids, producing glycine and aldehydes, via a retro-aldol mechanism. This is Serine hydroxymethyltransferase from Prochlorococcus marinus (strain MIT 9301).